The primary structure comprises 132 residues: uncharacterized protein (132 aa).

A run of 2 helical transmembrane segments spans residues 12–32 (VIGF…KKLY) and 37–57 (LTLA…IPVL).

Its subcellular location is the cell membrane. This is an uncharacterized protein from Methanocaldococcus jannaschii (strain ATCC 43067 / DSM 2661 / JAL-1 / JCM 10045 / NBRC 100440) (Methanococcus jannaschii).